The primary structure comprises 311 residues: L-lactate dehydrogenase 2 (311 aa).

NAD(+)-binding residues include valine 14, aspartate 35, and arginine 40. Residues arginine 90 and 122–125 (NPCD) each bind substrate. NAD(+) is bound by residues 120-122 (ATN) and threonine 145. A substrate-binding site is contributed by 150 to 153 (DTTR). Residue histidine 177 is the Proton acceptor of the active site. Residue threonine 230 coordinates substrate.

It belongs to the LDH/MDH superfamily. LDH family. As to quaternary structure, homotetramer.

It localises to the cytoplasm. The enzyme catalyses (S)-lactate + NAD(+) = pyruvate + NADH + H(+). Its pathway is fermentation; pyruvate fermentation to lactate; (S)-lactate from pyruvate: step 1/1. In terms of biological role, catalyzes the conversion of lactate to pyruvate. The protein is L-lactate dehydrogenase 2 of Listeria monocytogenes serovar 1/2a (strain ATCC BAA-679 / EGD-e).